Here is a 339-residue protein sequence, read N- to C-terminus: Ferrochelatase (339 aa).

2 residues coordinate Fe cation: His-209 and Glu-290.

It belongs to the ferrochelatase family.

Its subcellular location is the cytoplasm. It carries out the reaction heme b + 2 H(+) = protoporphyrin IX + Fe(2+). It participates in porphyrin-containing compound metabolism; protoheme biosynthesis; protoheme from protoporphyrin-IX: step 1/1. In terms of biological role, catalyzes the ferrous insertion into protoporphyrin IX. In Rhizobium meliloti (strain 1021) (Ensifer meliloti), this protein is Ferrochelatase.